A 399-amino-acid polypeptide reads, in one-letter code: Argininosuccinate synthase (399 aa).

8 to 16 contributes to the ATP binding site; sequence AYSGGLDTS. Tyrosine 87 is an L-citrulline binding site. Glycine 117 contributes to the ATP binding site. L-aspartate-binding residues include threonine 119, asparagine 123, and aspartate 124. Asparagine 123 serves as a coordination point for L-citrulline. Arginine 127, serine 175, glutamate 260, and tyrosine 272 together coordinate L-citrulline.

Belongs to the argininosuccinate synthase family. Type 1 subfamily. As to quaternary structure, homotetramer.

The protein localises to the cytoplasm. The catalysed reaction is L-citrulline + L-aspartate + ATP = 2-(N(omega)-L-arginino)succinate + AMP + diphosphate + H(+). The protein operates within amino-acid biosynthesis; L-arginine biosynthesis; L-arginine from L-ornithine and carbamoyl phosphate: step 2/3. The sequence is that of Argininosuccinate synthase from Rhodococcus erythropolis (strain PR4 / NBRC 100887).